Here is a 130-residue protein sequence, read N- to C-terminus: MSDNKEDSTVDNSNSTEEVPLPTRFEVELEFVQSLANIPYVTYLLTQQQLLWKDPKFKNYLKYLEYWCEPPYAQCIVYPNALFILKLLNGFMEKATVNEDGLLDGLEDLPKVIQLQGNQWMNEMVERWAN.

Belongs to the Mediator complex subunit 31 family. In terms of assembly, component of the Mediator complex.

The protein localises to the nucleus. In terms of biological role, component of the Mediator complex, a coactivator involved in the regulated transcription of nearly all RNA polymerase II-dependent genes. Mediator functions as a bridge to convey information from gene-specific regulatory proteins to the basal RNA polymerase II transcription machinery. Mediator is recruited to promoters by direct interactions with regulatory proteins and serves as a scaffold for the assembly of a functional preinitiation complex with RNA polymerase II and the general transcription factors. The sequence is that of Mediator of RNA polymerase II transcription subunit 31 (SOH1) from Candida glabrata (strain ATCC 2001 / BCRC 20586 / JCM 3761 / NBRC 0622 / NRRL Y-65 / CBS 138) (Yeast).